A 469-amino-acid polypeptide reads, in one-letter code: MGIKGLTGLLSQHAPKAIKEIKTLFGRKVAIDASMSIYQFLIAVRQKDGELLTNDAGETTRYLMGLFYRTLRIVENGIKPAYIFDGKPPELKKGVLSKRLERREEAKEEGEEAKETGTVEDVDRFSRRTVKVTREHNQECQRLLRLMGIPVVIAPSEAEAQCAELARGGKVYIALYYAAGSEDMDTLTFNAPILFRHLTFSEAKKQPISEINLKEALEGPLYSFPTFIDLCILLGCDYLEPIKGVGPKSALKLIREYGGLKGVVKHLREKAATQKAAQAAVESDEESEHEEEDEPAPTSDVEMPDPVEEDQDGEEEAEPKSSQATPKKKKASSKTKEKRKGKGGGGMQIPEEWPWEEAKKIFKRPSHVHRDLEWTNPDVDGLVQFLVNEKGFNEDRVRKGAEKLQKFLNSKQQGRLDGFFSVKPKEKAAAPAPVGKAKGKGKIDAKAKGTKRKVDEKAESSAGKKPRKK.

Positions 1–103 (MGIKGLTGLL…GVLSKRLERR (103 aa)) are N-domain. Asp-32 serves as a coordination point for Mg(2+). DNA-binding residues include Arg-45 and Arg-69. Mg(2+)-binding residues include Asp-85, Glu-157, Glu-159, Asp-183, and Asp-185. The tract at residues 121–257 (DVDRFSRRTV…KSALKLIREY (137 aa)) is I-domain. Glu-157 contacts DNA. DNA is bound by residues Gly-235 and Asp-237. Asp-237 contributes to the Mg(2+) binding site. A disordered region spans residues 274 to 354 (QKAAQAAVES…GGMQIPEEWP (81 aa)). Acidic residues-rich tracts occupy residues 282–295 (ESDE…EDEP) and 302–317 (EMPD…EEEA). Residues 326–342 (PKKKKASSKTKEKRKGK) show a composition bias toward basic residues. The interval 412–420 (QQGRLDGFF) is interaction with PCNA. Positions 424-469 (PKEKAAAPAPVGKAKGKGKIDAKAKGTKRKVDEKAESSAGKKPRKK) are disordered. The segment covering 441–459 (GKIDAKAKGTKRKVDEKAE) has biased composition (basic and acidic residues).

It belongs to the XPG/RAD2 endonuclease family. FEN1 subfamily. Interacts with PCNA. Three molecules of FEN1 bind to one PCNA trimer with each molecule binding to one PCNA monomer. PCNA stimulates the nuclease activity without altering cleavage specificity. Mg(2+) serves as cofactor. In terms of processing, phosphorylated. Phosphorylation upon DNA damage induces relocalization to the nuclear plasma.

It is found in the nucleus. Its subcellular location is the nucleolus. The protein resides in the nucleoplasm. It localises to the mitochondrion. In terms of biological role, structure-specific nuclease with 5'-flap endonuclease and 5'-3' exonuclease activities involved in DNA replication and repair. During DNA replication, cleaves the 5'-overhanging flap structure that is generated by displacement synthesis when DNA polymerase encounters the 5'-end of a downstream Okazaki fragment. It enters the flap from the 5'-end and then tracks to cleave the flap base, leaving a nick for ligation. Also involved in the long patch base excision repair (LP-BER) pathway, by cleaving within the apurinic/apyrimidinic (AP) site-terminated flap. Acts as a genome stabilization factor that prevents flaps from equilibrating into structures that lead to duplications and deletions. Also possesses 5'-3' exonuclease activity on nicked or gapped double-stranded DNA, and exhibits RNase H activity. Also involved in replication and repair of rDNA and in repairing mitochondrial DNA. The sequence is that of Flap endonuclease 1-B from Laccaria bicolor (strain S238N-H82 / ATCC MYA-4686) (Bicoloured deceiver).